The primary structure comprises 401 residues: MPSFKTLDDLSDIRGKRVLVRVDLNVPVKDGKVTDVTRIERVAPTILELSEKGAKVILLAHFGRPKDGPSSDLSLSLIAPSVEEVLDHAVLTASDCIGEAAASAVAAMNDGDILLLENTRFHKGEENNDSDFTKALAANGDIYVNDAFSAAHRAHASTEGLAHHLPAYAGRTMQAELEALEKGLGDPARPVVAIVGGAKVSTKIDLLMNLVKKVDALVIGGGMANTFIAARGTNVGKSLCEHDLAETAKQIMIEAATAGCAIILPEDGVIAREFKAGAANETVDINAIPADAMVLDVGPKSVEAINAWIERAATLVWNGPLGAFEIGPFDAATVAAAKYAAGRTIAGKLTSVAGGGDTVSALNHAGVADDFTYVSTAGGAFLEWMEGKELPGVAVLNAAAA.

Substrate-binding positions include 23–25 (DLN), arginine 38, 61–64 (HFGR), arginine 120, and arginine 153. ATP-binding positions include lysine 203, glutamate 325, and 355-358 (GGDT).

It belongs to the phosphoglycerate kinase family. Monomer.

The protein localises to the cytoplasm. It carries out the reaction (2R)-3-phosphoglycerate + ATP = (2R)-3-phospho-glyceroyl phosphate + ADP. It functions in the pathway carbohydrate degradation; glycolysis; pyruvate from D-glyceraldehyde 3-phosphate: step 2/5. This Rhizobium johnstonii (strain DSM 114642 / LMG 32736 / 3841) (Rhizobium leguminosarum bv. viciae) protein is Phosphoglycerate kinase.